Reading from the N-terminus, the 139-residue chain is Small ribosomal subunit protein uS12 (139 aa).

D102 is subject to 3-methylthioaspartic acid.

Belongs to the universal ribosomal protein uS12 family. As to quaternary structure, part of the 30S ribosomal subunit. Contacts proteins S8 and S17. May interact with IF1 in the 30S initiation complex.

With S4 and S5 plays an important role in translational accuracy. Functionally, interacts with and stabilizes bases of the 16S rRNA that are involved in tRNA selection in the A site and with the mRNA backbone. Located at the interface of the 30S and 50S subunits, it traverses the body of the 30S subunit contacting proteins on the other side and probably holding the rRNA structure together. The combined cluster of proteins S8, S12 and S17 appears to hold together the shoulder and platform of the 30S subunit. The polypeptide is Small ribosomal subunit protein uS12 (Mycoplasma capricolum subsp. capricolum (strain California kid / ATCC 27343 / NCTC 10154)).